The sequence spans 331 residues: T-cell acute lymphocytic leukemia protein 1 (331 aa).

Positions 1-22 (MTERPPSEAARSDPQLEGRDAA) are enriched in basic and acidic residues. Disordered stretches follow at residues 1-27 (MTER…ASMA) and 40-86 (ETSR…EARH). Ser12 carries the phosphoserine modification. A compositionally biased stretch (gly residues) spans 56-70 (ARGGPGGGPAGGGGA). Over residues 72–86 (RDLKGRDAATAEARH) the composition is skewed to basic and acidic residues. Phosphoserine is present on residues Ser122 and Ser172. The 53-residue stretch at 187–239 (VRRIFTNSRERWRQQNVNGAFAELRKLIPTHPPDKKLSKNEILRLAMKYINFL) folds into the bHLH domain. The segment at 249–331 (EGTQRAKTGK…LPAADGAGPR (83 aa)) is disordered. A compositionally biased stretch (gly residues) spans 263–275 (GAGGGGGGGGGGA).

In terms of assembly, efficient DNA binding requires dimerization with another bHLH protein. Forms heterodimers with TCF3. Binds to the LIM domain containing protein LMO2 and to DRG1. Can assemble in a complex with LDB1 and LMO2. Component of a TAL-1 complex composed at least of CBFA2T3, LDB1, TAL1 and TCF3. Interacts with SBNO2; this interaction inhibits TAL1 occupancy of the DCSTAMP promoter, leading to the activation of the DCSTAMP promoter by the transcription factor MITF. Phosphorylated on serine residues. Phosphorylation of Ser-122 is strongly stimulated by hypoxia. In terms of processing, ubiquitinated; subsequent to hypoxia-dependent phosphorylation of Ser-122, ubiquitination targets the protein for rapid degradation via the ubiquitin system. This process may be characteristic for microvascular endothelial cells, since it could not be observed in large vessel endothelial cells. Leukemic stem cell.

Its subcellular location is the nucleus. Implicated in the genesis of hemopoietic malignancies. It may play an important role in hemopoietic differentiation. Serves as a positive regulator of erythroid differentiation. The polypeptide is T-cell acute lymphocytic leukemia protein 1 (TAL1) (Homo sapiens (Human)).